Consider the following 288-residue polypeptide: Ribosomal RNA small subunit methyltransferase A (288 aa).

Positions 28, 30, 55, 77, 103, and 123 each coordinate S-adenosyl-L-methionine.

The protein belongs to the class I-like SAM-binding methyltransferase superfamily. rRNA adenine N(6)-methyltransferase family. RsmA subfamily.

It localises to the cytoplasm. The catalysed reaction is adenosine(1518)/adenosine(1519) in 16S rRNA + 4 S-adenosyl-L-methionine = N(6)-dimethyladenosine(1518)/N(6)-dimethyladenosine(1519) in 16S rRNA + 4 S-adenosyl-L-homocysteine + 4 H(+). Functionally, specifically dimethylates two adjacent adenosines (A1518 and A1519) in the loop of a conserved hairpin near the 3'-end of 16S rRNA in the 30S particle. May play a critical role in biogenesis of 30S subunits. The protein is Ribosomal RNA small subunit methyltransferase A of Xanthobacter autotrophicus (strain ATCC BAA-1158 / Py2).